An 874-amino-acid chain; its full sequence is MTENSQQQPPASEPELPTQYAPADVEGTLYERWVERGYFEADAKSDKPPFTVVIPPPNVTGSLHLGHAFEHTLIDALTRRKRMQGYETLWQPGMDHAGIATQNVVERELGKEGKSRHDLGRAAFVERVWQWKAESGGQISGQMRRLGDGVAWSRERFTMDEGLSQAVQTIFKKLYDDELIYRAERIINWCPRCLTAISDIEVEYQDDDGELVSMKYGEGDDTIVVATTRAETMLGDTAVAVHPDDERYKHLVGKTIRLPLTERFIPVVADTHVDPEFGTGAVKVTPAHDPNDFEIGQRHNLPNIAVMDEHAVITVSGPFQGLDRLEARSAIVAALRAEGRIVAEKRPYVHSVGHCSRCKTTIEPRLSMQWWVKVGPLAKAAGDAVREGKVKIHPQEMEKRYFDWVDNLHDWCISRQLWWGHRIPVWYGPNGEVVCVGPDDEVPTGEGWSQDTDVLDTWFSSGLWPFSTLGWPEQTESLAKFYPNSVLVTGYDILFFWVARMMMFGLYAMDGTPPFHTIALHGMVRDQFGKKMSKSFGNAVNPLDWMDKYGSDALRFTLARGANPGVDVPIGEDWVQGSRNFANKIWNATRFALMNGATVEGELPPVEQQSATDRWILSRLNATVAEVDALYDDYQFAKLSDALFHFAWDEVFDWYVELSKTTFMGGGEAAKVSGRVLGEVLDVTLRLLHPIVPFVTETLWTTLTGGESVVIADWPVDSGFRDQAAEKEIETLQSVITEVRRFRADQGLQPGQRVPARLTLDDTALAPHEAAIRQLLRLQPEGEDFAATATLPVAGATVALDLSGTIDIVAERKRLAKDLAAAEKEKAQAGAKLGNEAFLAKAPDHVVDKIRGRLAKADEDIARIQAQLDRMPEA.

The span at 1 to 10 shows a compositional bias: polar residues; sequence MTENSQQQPP. Residues 1 to 23 are disordered; it reads MTENSQQQPPASEPELPTQYAPA. Positions 57–67 match the 'HIGH' region motif; that stretch reads PNVTGSLHLGH. A 'KMSKS' region motif is present at residues 531–535; that stretch reads KMSKS. Position 534 (lysine 534) interacts with ATP. Positions 806-871 form a coiled coil; the sequence is IDIVAERKRL…ARIQAQLDRM (66 aa).

The protein belongs to the class-I aminoacyl-tRNA synthetase family. ValS type 1 subfamily. Monomer.

The protein resides in the cytoplasm. The catalysed reaction is tRNA(Val) + L-valine + ATP = L-valyl-tRNA(Val) + AMP + diphosphate. Catalyzes the attachment of valine to tRNA(Val). As ValRS can inadvertently accommodate and process structurally similar amino acids such as threonine, to avoid such errors, it has a 'posttransfer' editing activity that hydrolyzes mischarged Thr-tRNA(Val) in a tRNA-dependent manner. The protein is Valine--tRNA ligase of Streptomyces avermitilis (strain ATCC 31267 / DSM 46492 / JCM 5070 / NBRC 14893 / NCIMB 12804 / NRRL 8165 / MA-4680).